The chain runs to 413 residues: CinA-like protein (413 aa).

The protein belongs to the CinA family.

In Desulfotalea psychrophila (strain LSv54 / DSM 12343), this protein is CinA-like protein.